The chain runs to 544 residues: Terpene synthase 9 (544 aa).

Aspartate 296, aspartate 300, and glutamate 449 together coordinate Mg(2+). The DDXXD motif signature appears at 296 to 300 (DDTFD).

This sequence belongs to the terpene synthase family. Tpsa subfamily. The cofactor is Mg(2+). Requires Mn(2+) as cofactor.

It carries out the reaction (2E,6E)-farnesyl diphosphate = (1E,4E)-germacrene B + diphosphate. The catalysed reaction is (2E)-geranyl diphosphate = terpinolene + diphosphate. The enzyme catalyses (2E)-geranyl diphosphate = limonene + diphosphate. It catalyses the reaction (2E)-geranyl diphosphate = beta-myrcene + diphosphate. It carries out the reaction (2Z,6Z)-farnesyl diphosphate = germacrene A + diphosphate. The catalysed reaction is (2Z,6Z)-farnesyl diphosphate = alpha-humulene + diphosphate. The protein operates within secondary metabolite biosynthesis; terpenoid biosynthesis. Sesquiterpene synthase involved in the biosynthesis of volatile compounds. Mediates the conversion of (2E,6E)-farnesyl diphosphate (FPP) into (1E,4E)-germacrene B, but also smaller amounts of germacrene A and C, and of (2Z,6Z)-farnesyl diphosphate ((ZZ)-FPP) into alpha-humulene, germacrene A and germacrene B. Can act with a low efficiency as a monoterpene synthase with geranyl diphosphate (GPP) as substrate, thus producing beta-myrcene, limonene and terpinolene. The chain is Terpene synthase 9 from Solanum habrochaites (Wild tomato).